The chain runs to 492 residues: Protein nucleotidyltransferase YdiU (492 aa).

Residues G95, G97, R98, K118, D130, G131, R181, and R188 each coordinate ATP. The active-site Proton acceptor is D257. Residues N258 and D267 each contribute to the Mg(2+) site. D267 is a binding site for ATP. The span at Y466–Y475 shows a compositional bias: basic and acidic residues. The interval Y466–T492 is disordered.

The protein belongs to the SELO family. Mg(2+) serves as cofactor. The cofactor is Mn(2+).

The enzyme catalyses L-seryl-[protein] + ATP = 3-O-(5'-adenylyl)-L-seryl-[protein] + diphosphate. It catalyses the reaction L-threonyl-[protein] + ATP = 3-O-(5'-adenylyl)-L-threonyl-[protein] + diphosphate. It carries out the reaction L-tyrosyl-[protein] + ATP = O-(5'-adenylyl)-L-tyrosyl-[protein] + diphosphate. The catalysed reaction is L-histidyl-[protein] + UTP = N(tele)-(5'-uridylyl)-L-histidyl-[protein] + diphosphate. The enzyme catalyses L-seryl-[protein] + UTP = O-(5'-uridylyl)-L-seryl-[protein] + diphosphate. It catalyses the reaction L-tyrosyl-[protein] + UTP = O-(5'-uridylyl)-L-tyrosyl-[protein] + diphosphate. In terms of biological role, nucleotidyltransferase involved in the post-translational modification of proteins. It can catalyze the addition of adenosine monophosphate (AMP) or uridine monophosphate (UMP) to a protein, resulting in modifications known as AMPylation and UMPylation. This chain is Protein nucleotidyltransferase YdiU, found in Syntrophotalea carbinolica (strain DSM 2380 / NBRC 103641 / GraBd1) (Pelobacter carbinolicus).